We begin with the raw amino-acid sequence, 497 residues long: MANDKGDISKDGVSRRKFLGGAVIGAAAAAGVGSQILSLSATAQGADKERVGPLQSNVDYDAVVIGGGFAGVTAARELSRSGLKTLVLEGRSRLGGRTFTSKLDGEKVELGGTWVHWTQPNVWTEVMHYGLEIEETVGLASPETVIWVTDNQVKRAPAAEAFEIFGAACTEYYKEAHNIYPRPFDPFFAKKALQEMDGLSASEYLNKLSLTREQKDMMDSWLSGNGHNYPETIAYSEIMRWFALSNFNMPTMFDSIARYKIKSGTVSLLEAMVAESDMEVQLSTPVLKVKQDSHRVLITTEEGTIAASAVVMAVPLNTMGDVEYSPRLSDAKSEIASQGHAGKGVKGYIRIKQDVGNVMTYAPARNDVTPFTSVFTDHVGENGTLLIAFSADPKLVDINDSKAVEKALHPLLPGVEVTSSYGYDWNLDPFSKGTWCTYRPGQTTRYLTELQKREGRLFFAGSDMANGWRGFIDGAIESGREVGYQVASYLKGKNSNA.

The segment at residues methionine 1 to alanine 43 is a signal peptide (tat-type signal). Residues alanine 70, glutamate 89, arginine 97, tryptophan 114, valine 286, serine 462, and isoleucine 472 each contribute to the FAD site.

This sequence belongs to the flavin monoamine oxidase family. As to quaternary structure, homodimer. FAD serves as cofactor. Predicted to be exported by the Tat system. The position of the signal peptide cleavage has not been experimentally proven.

It is found in the periplasm. The catalysed reaction is pseudooxynicotine + 2 Fe(III)-[cytochrome c] + H2O = 4-oxo-4-(pyridin-3-yl)butanal + methylamine + 2 Fe(II)-[cytochrome c] + 2 H(+). It participates in alkaloid degradation; nicotine degradation. Strongly inhibited by Ag(+), Co(2+), Cu(2+) and Hg(2+). Involved in nicotine degradation. Catalyzes the deamination of pseudooxynicotine to 3-succinoylsemialdehyde-pyridine. The chain is Pseudooxynicotine dehydrogenase from Pseudomonas sp.